The primary structure comprises 974 residues: Alpha-1,4 glucan phosphorylase L-2 isozyme, chloroplastic/amyloplastic (974 aa).

The N-terminal 81 residues, 1-81 (MATFAVSGLN…LDVFQPDSTS (81 aa)), are a transit peptide targeting the chloroplast. Residues 509-551 (ADVEKAADEEQEEEGKDDSKDEETEAVKAETTNEEEETEVKKV) are disordered. Acidic residues predominate over residues 517–532 (EEQEEEGKDDSKDEET). Lysine 820 bears the N6-(pyridoxal phosphate)lysine mark.

This sequence belongs to the glycogen phosphorylase family. Pyridoxal 5'-phosphate serves as cofactor. As to expression, leaves.

It localises to the plastid. It is found in the chloroplast. The protein resides in the amyloplast. The catalysed reaction is [(1-&gt;4)-alpha-D-glucosyl](n) + phosphate = [(1-&gt;4)-alpha-D-glucosyl](n-1) + alpha-D-glucose 1-phosphate. Functionally, phosphorylase is an important allosteric enzyme in carbohydrate metabolism. Enzymes from different sources differ in their regulatory mechanisms and in their natural substrates. However, all known phosphorylases share catalytic and structural properties. This Solanum tuberosum (Potato) protein is Alpha-1,4 glucan phosphorylase L-2 isozyme, chloroplastic/amyloplastic (STP-1).